The sequence spans 378 residues: Serpin B6 (378 aa).

The residue at position 1 (methionine 1) is an N-acetylmethionine. An N6-acetyllysine modification is found at lysine 196.

This sequence belongs to the serpin family. Ov-serpin subfamily. Forms a complex with the monomeric form of beta-tryptase. As to expression, brain.

It is found in the cytoplasm. Its function is as follows. Inhibitor of cathepsin G, kallikrein-8 and thrombin. May play an important role in the inner ear in the protection against leakage of lysosomal content during stress. May be involved in the regulation of serine proteinases present in the brain or extravasated from the blood. This is Serpin B6 (SERPINB6) from Bos taurus (Bovine).